We begin with the raw amino-acid sequence, 491 residues long: Ketol-acid reductoisomerase (NADP(+)) (491 aa).

The KARI N-terminal Rossmann domain maps to 15 to 208; sequence AQLGKCRFMA…GGHRAGVLES (194 aa). NADP(+) contacts are provided by residues 45–48, Arg68, Arg76, Ser78, and 108–110; these read CGAQ and DKQ. His132 is a catalytic residue. Residue Gly158 participates in NADP(+) binding. KARI C-terminal knotted domains are found at residues 209 to 344 and 345 to 484; these read SFVA…NAPQ and FEGK…MTDM. Residues Asp217, Glu221, Glu389, and Glu393 each coordinate Mg(2+). Ser414 contacts substrate.

Belongs to the ketol-acid reductoisomerase family. Mg(2+) is required as a cofactor.

The catalysed reaction is (2R)-2,3-dihydroxy-3-methylbutanoate + NADP(+) = (2S)-2-acetolactate + NADPH + H(+). It catalyses the reaction (2R,3R)-2,3-dihydroxy-3-methylpentanoate + NADP(+) = (S)-2-ethyl-2-hydroxy-3-oxobutanoate + NADPH + H(+). It participates in amino-acid biosynthesis; L-isoleucine biosynthesis; L-isoleucine from 2-oxobutanoate: step 2/4. The protein operates within amino-acid biosynthesis; L-valine biosynthesis; L-valine from pyruvate: step 2/4. Functionally, involved in the biosynthesis of branched-chain amino acids (BCAA). Catalyzes an alkyl-migration followed by a ketol-acid reduction of (S)-2-acetolactate (S2AL) to yield (R)-2,3-dihydroxy-isovalerate. In the isomerase reaction, S2AL is rearranged via a Mg-dependent methyl migration to produce 3-hydroxy-3-methyl-2-ketobutyrate (HMKB). In the reductase reaction, this 2-ketoacid undergoes a metal-dependent reduction by NADPH to yield (R)-2,3-dihydroxy-isovalerate. The protein is Ketol-acid reductoisomerase (NADP(+)) of Serratia proteamaculans (strain 568).